The following is a 204-amino-acid chain: CASP-like protein 1U3 (204 aa).

Topologically, residues M1–N19 are cytoplasmic. A helical transmembrane segment spans residues L20–A40. Residues S41 to P63 are Extracellular-facing. The helical transmembrane segment at F64–L84 threads the bilayer. Over T85–V97 the chain is Cytoplasmic. A helical transmembrane segment spans residues L98–F118. At A119–Q146 the chain is on the extracellular side. Residues V147–V167 form a helical membrane-spanning segment. At K168–H204 the chain is on the cytoplasmic side. Residues S173–H204 form a disordered region.

Belongs to the Casparian strip membrane proteins (CASP) family. Homodimer and heterodimers.

It localises to the cell membrane. The protein is CASP-like protein 1U3 of Oryza sativa subsp. japonica (Rice).